Reading from the N-terminus, the 124-residue chain is Small ribosomal subunit protein uS13 (124 aa).

Residues 95 to 124 (GLPVRGQRTKTNARTRKGPKRTIAGKKKAK) form a disordered region.

It belongs to the universal ribosomal protein uS13 family. Part of the 30S ribosomal subunit. Forms a loose heterodimer with protein S19. Forms two bridges to the 50S subunit in the 70S ribosome.

In terms of biological role, located at the top of the head of the 30S subunit, it contacts several helices of the 16S rRNA. In the 70S ribosome it contacts the 23S rRNA (bridge B1a) and protein L5 of the 50S subunit (bridge B1b), connecting the 2 subunits; these bridges are implicated in subunit movement. Contacts the tRNAs in the A and P-sites. The sequence is that of Small ribosomal subunit protein uS13 from Rhodococcus jostii (strain RHA1).